A 502-amino-acid polypeptide reads, in one-letter code: MAYFRRNFYGGRRHYYRRRNAYTRRRYRRVRRRHRGRRFPYFKQGKRRRTRLLHVTDPRYKAHCTITGWVPIAMTRIQLISQPFTVDTLSPFHVYPGGYGYGVFTLEAMYKEHLMKRNRWSRSNAGFDLGRYLGTWLTLVPHPYFSYLFYYDPEYGNTFEFKKLIHPAIMITHPKTILVLSNKRGGNRRKWPRMWIPRPAIFADGWEFQKDLCQHGLFAFGWAWVDLDRPWMADISKPAQTIDPSTYDKKNDMINKVPNMWWKEAANDWLTEWGRPQGSGVTQQFNQLAMAGPFVLKTNKSEYVNTELLQIILFYKSHFQWGGEFLQDKVLADPTKIPPAQTAYYQQAGQTNLYGSPYKPLSSGLHDSISELPIASPPQNPHKYTVRPSDYDKDGILTEESFRRLTDSPYTSDGGHSFSSFSTASDPLEGTSRYARPLGRKTTREPSRRRKRRRRSPSPEDEETAPIPPKSNSEPSISGPGRATRKQLLQRLFRRLLTSSPQ.

2 disordered regions span residues 369-392 (ISEL…SDYD) and 405-487 (LTDS…TRKQ). The span at 447-456 (SRRRKRRRRS) shows a compositional bias: basic residues.

Belongs to the anelloviridae capsid protein family.

Its subcellular location is the virion. Its function is as follows. Self-assembles to form an icosahedral capsid with a T=1 symmetry, about 30 nm in diameter, and consisting of 60 capsid proteins. The capsid encapsulates the genomic DNA. Capsid protein is involved in attachment and entry into the host cell. In Tupaia, this protein is Capsid protein.